The sequence spans 248 residues: Isoamyl acetate-hydrolyzing esterase 1 homolog (248 aa).

The Nucleophile role is filled by S24. An N6-succinyllysine modification is found at K63. D196 functions as the Proton donor in the catalytic mechanism. H199 serves as the catalytic Proton acceptor.

It belongs to the 'GDSL' lipolytic enzyme family. IAH1 subfamily.

In terms of biological role, probable lipase. This is Isoamyl acetate-hydrolyzing esterase 1 homolog (IAH1) from Homo sapiens (Human).